The primary structure comprises 252 residues: Uridylate kinase (252 aa).

27 to 30 (KLGG) contacts ATP. Position 68 (Gly-68) interacts with UMP. Positions 69 and 73 each coordinate ATP. UMP is bound by residues Asp-88 and 149 to 156 (MGLPYFST). 2 residues coordinate ATP: Tyr-182 and Asp-185.

Belongs to the UMP kinase family. Homohexamer.

It localises to the cytoplasm. The enzyme catalyses UMP + ATP = UDP + ADP. It functions in the pathway pyrimidine metabolism; CTP biosynthesis via de novo pathway; UDP from UMP (UMPK route): step 1/1. Inhibited by UTP. Functionally, catalyzes the reversible phosphorylation of UMP to UDP. In Mycobacterium sp. (strain JLS), this protein is Uridylate kinase.